The following is a 210-amino-acid chain: ATP-dependent dethiobiotin synthetase BioD (210 aa).

Residue 13–18 participates in ATP binding; sequence DVGKTV. Position 17 (T17) interacts with Mg(2+). K33 is a catalytic residue. Mg(2+) is bound by residues R47 and E101. ATP contacts are provided by residues 101–104 and 185–187; these read EGAG and PPL.

This sequence belongs to the dethiobiotin synthetase family. In terms of assembly, homodimer. The cofactor is Mg(2+).

It localises to the cytoplasm. It carries out the reaction (7R,8S)-7,8-diammoniononanoate + CO2 + ATP = (4R,5S)-dethiobiotin + ADP + phosphate + 3 H(+). The protein operates within cofactor biosynthesis; biotin biosynthesis; biotin from 7,8-diaminononanoate: step 1/2. Catalyzes a mechanistically unusual reaction, the ATP-dependent insertion of CO2 between the N7 and N8 nitrogen atoms of 7,8-diaminopelargonic acid (DAPA, also called 7,8-diammoniononanoate) to form a ureido ring. This is ATP-dependent dethiobiotin synthetase BioD from Afipia carboxidovorans (strain ATCC 49405 / DSM 1227 / KCTC 32145 / OM5) (Oligotropha carboxidovorans).